The following is a 310-amino-acid chain: Delta(1)-pyrroline-2-carboxylate reductase 1 (310 aa).

Belongs to the ornithine cyclodeaminase/mu-crystallin family.

It carries out the reaction L-proline + NAD(+) = 1-pyrroline-2-carboxylate + NADH + H(+). It catalyses the reaction L-proline + NADP(+) = 1-pyrroline-2-carboxylate + NADPH + H(+). Catalyzes the reduction of Delta(1)-pyrroline-2-carboxylate (Pyr2C) to L-proline, using NADPH as the electron donor. May be involved in a degradation pathway that converts trans-3-hydroxy-L-proline (t3LHyp) to L-proline. This is Delta(1)-pyrroline-2-carboxylate reductase 1 from Burkholderia multivorans (strain ATCC 17616 / 249).